A 326-amino-acid polypeptide reads, in one-letter code: Zinc transporter 11 (326 aa).

The signal sequence occupies residues 1–20 (MSRSLVFFFLFLVLVVPCLS). At 21-49 (HGTGGDHDDDEASHVKSSDLKSKSLISVK) the chain is on the extracellular side. The helical transmembrane segment at 50-70 (IACLVIIFVLTFISGVSPYFL) threads the bilayer. Residues 71–75 (KWSQG) are Cytoplasmic-facing. The chain crosses the membrane as a helical span at residues 76 to 96 (FLVLGTQFAGGVFLATALMHF). Topologically, residues 97–121 (LSDADETFRGLLTAEGESEPSPAYP) are extracellular. The chain crosses the membrane as a helical span at residues 122-142 (FAYMLACAGFMLTMLADSVIA). The Cytoplasmic portion of the chain corresponds to 143 to 174 (HIYSKTQNDLELQGEDKSNQRSATTETSIGDS). A helical membrane pass occupies residues 175–195 (ILLIVALCFHSVFEGIAIGIS). At 196 to 203 (ETKSDAWR) the chain is on the extracellular side. Residues 204–224 (ALWTITLHKIFAAIAMGIALL) form a helical membrane-spanning segment. The Cytoplasmic portion of the chain corresponds to 225–235 (RMIPDRPLFSS). The chain crosses the membrane as a helical span at residues 236 to 256 (ITYSFAFAISSPIGVAIGIVI). Residues 257–262 (DATTQG) lie on the Extracellular side of the membrane. A helical transmembrane segment spans residues 263–283 (SIADWIFALSMSLACGVFVYV). Residues 284 to 305 (SVNHLLAKGYRPNKKVHVDEPR) lie on the Cytoplasmic side of the membrane. A helical membrane pass occupies residues 306 to 326 (YKFLAVLFGVVVIAIVMIWDT).

It belongs to the ZIP transporter (TC 2.A.5) family.

It localises to the cell membrane. Its function is as follows. Probably mediates zinc uptake from the rhizosphere. The polypeptide is Zinc transporter 11 (ZIP11) (Arabidopsis thaliana (Mouse-ear cress)).